The following is a 221-amino-acid chain: Endo-1,4-beta-xylanase 2 (221 aa).

The N-terminal stretch at 1–19 is a signal peptide; the sequence is MVAFTSLLAGFAAIAGVLS. The 190-residue stretch at 32 to 221 folds into the GH11 domain; the sequence is QTIGPGTGYS…SSGSASITVS (190 aa). Asn69 and Asn92 each carry an N-linked (GlcNAc...) asparagine glycan. The Nucleophile role is filled by Glu117. The active-site Proton donor is the Glu208.

Belongs to the glycosyl hydrolase 11 (cellulase G) family.

It localises to the secreted. It catalyses the reaction Endohydrolysis of (1-&gt;4)-beta-D-xylosidic linkages in xylans.. The protein operates within glycan degradation; xylan degradation. In terms of biological role, endo-1,4-beta-xylanase involved in the hydrolysis of xylan, a major structural heterogeneous polysaccharide found in plant biomass representing the second most abundant polysaccharide in the biosphere, after cellulose. This chain is Endo-1,4-beta-xylanase 2 (Xyn2), found in Trichoderma harzianum (Hypocrea lixii).